Consider the following 583-residue polypeptide: Ankyrin repeat and SOCS box protein 15 (583 aa).

ANK repeat units follow at residues Lys-75–Trp-104, Asp-110–Thr-139, Lys-143–Gln-172, Lys-176–Leu-205, Phe-209–Ala-238, Asp-242–Val-271, Ala-275–Ile-304, Ser-307–Ala-336, Glu-349–Leu-378, Asp-379–Cys-408, and Thr-416–Leu-444. Positions Trp-524–Asp-579 constitute an SOCS box domain.

This sequence belongs to the ankyrin SOCS box (ASB) family.

Its pathway is protein modification; protein ubiquitination. Functionally, may be a substrate-recognition component of a SCF-like ECS (Elongin-Cullin-SOCS-box protein) E3 ubiquitin-protein ligase complex which mediates the ubiquitination and subsequent proteasomal degradation of target proteins. In Mus musculus (Mouse), this protein is Ankyrin repeat and SOCS box protein 15 (Asb15).